The primary structure comprises 183 residues: uncharacterized protein (183 aa).

Positions 55–183 (PRAAVLLVDL…RSRRGSRPAR (129 aa)) constitute a GGDEF domain.

Might be involved in pSAM2 replication control. This is an uncharacterized protein from Streptomyces ambofaciens.